The primary structure comprises 376 residues: Serine/threonine-protein kinase-transforming protein mos (376 aa).

The Protein kinase domain occupies 94–376 (VCLMHRLGSG…KALADSIEPM (283 aa)). Residues 100-108 (LGSGGFGSV) and K121 contribute to the ATP site. Catalysis depends on D229, which acts as the Proton acceptor.

The protein belongs to the protein kinase superfamily. Ser/Thr protein kinase family.

The enzyme catalyses L-seryl-[protein] + ATP = O-phospho-L-seryl-[protein] + ADP + H(+). The catalysed reaction is L-threonyl-[protein] + ATP = O-phospho-L-threonyl-[protein] + ADP + H(+). In Moloney murine sarcoma virus (strain m1) (MoMSV), this protein is Serine/threonine-protein kinase-transforming protein mos (V-MOS).